Reading from the N-terminus, the 280-residue chain is Small ribosomal subunit protein uS3 (280 aa).

Residues 38 to 106 (IRKLLATGLE…QVQLNILEVK (69 aa)) enclose the KH type-2 domain. Residues 216-280 (AAAPAADRPR…SAGQPETTES (65 aa)) are disordered. Residues 237-270 (SGASGTTATSTDAGRAASEGTVEAPATEAAATAP) are compositionally biased toward low complexity.

Belongs to the universal ribosomal protein uS3 family. As to quaternary structure, part of the 30S ribosomal subunit. Forms a tight complex with proteins S10 and S14.

Its function is as follows. Binds the lower part of the 30S subunit head. Binds mRNA in the 70S ribosome, positioning it for translation. The protein is Small ribosomal subunit protein uS3 of Mycolicibacterium vanbaalenii (strain DSM 7251 / JCM 13017 / BCRC 16820 / KCTC 9966 / NRRL B-24157 / PYR-1) (Mycobacterium vanbaalenii).